A 345-amino-acid polypeptide reads, in one-letter code: C5a anaphylatoxin chemotactic receptor 1 (345 aa).

The Extracellular portion of the chain corresponds to 1–32 (MMVTVSYDYDYNSTFLPDGFVDNYVERLSFGD). Residues Tyr-9 and Tyr-11 each carry the sulfotyrosine modification. Asn-12 is a glycosylation site (N-linked (GlcNAc...) asparagine). Residues 33–59 (LVAVVIMVVVFLVGVPGNALVVWVTAC) form a helical membrane-spanning segment. Residues 60–64 (EARRH) are Cytoplasmic-facing. The helical transmembrane segment at 65 to 88 (INAIWFLNLAAADLLSCLALPILL) threads the bilayer. Residues 89–105 (VSTVHLNHWYFGDTACK) lie on the Extracellular side of the membrane. Cys-104 and Cys-183 are oxidised to a cystine. A helical membrane pass occupies residues 106 to 127 (VLPSLILLNMYTSILLLATISA). The Cytoplasmic segment spans residues 128–148 (DRLLLVLSPIWCQRFRGGCLA). A helical membrane pass occupies residues 149 to 169 (WTACGLAWVLALLLSSPSFLY). The Extracellular segment spans residues 170–195 (RRTHNEHFSFKVYCVTDYGRDISKER). A helical membrane pass occupies residues 196 to 221 (AVALVRLLVGFIVPLITLTACYTFLL). Residues 222 to 237 (LRTWSRKATRSAKTVK) lie on the Cytoplasmic side of the membrane. A helical transmembrane segment spans residues 238-260 (VVVAVVSSFFVFWLPYQVTGILL). At 261–277 (AWHSPNSATYRNTKALD) the chain is on the extracellular side. The chain crosses the membrane as a helical span at residues 278–298 (AVCVAFAYINCCINPIIYVVA). Residues 299-345 (GHGFQGRLLKSLPSVLRNVLTEESLDKRHQSFARSTVDTMPQKSESV) are Cytoplasmic-facing. A phosphoserine mark is found at Ser-309, Ser-312, Ser-322, Ser-329, and Ser-333.

It belongs to the G-protein coupled receptor 1 family. In terms of assembly, homodimer. May also form higher-order oligomers. Interacts (when phosphorylated) with ARRB1 and ARRB2; the interaction is associated with internalization of C5aR. In terms of processing, sulfation plays a critical role in the association of C5aR with C5a, but no significant role in the ability of the receptor to transduce a signal and mobilize calcium in response to a small peptide agonist. Phosphorylated on serine residues in response to C5a binding, resulting in internalization of the receptor and short-term desensitization to C5a. As to expression, expressed strongly in macrophages and spleen. Weak expression detected in lung, liver, brain, heart and kidney.

It localises to the cell membrane. The protein resides in the cytoplasmic vesicle. Its function is as follows. Receptor for the chemotactic and inflammatory peptide anaphylatoxin C5a. The ligand interacts with at least two sites on the receptor: a high-affinity site on the extracellular N-terminus, and a second site in the transmembrane region which activates downstream signaling events. Receptor activation stimulates chemotaxis, granule enzyme release, intracellular calcium release and superoxide anion production. The protein is C5a anaphylatoxin chemotactic receptor 1 (C5AR1) of Cavia porcellus (Guinea pig).